A 97-amino-acid polypeptide reads, in one-letter code: Putative pterin-4-alpha-carbinolamine dehydratase (97 aa).

The protein belongs to the pterin-4-alpha-carbinolamine dehydratase family.

The enzyme catalyses (4aS,6R)-4a-hydroxy-L-erythro-5,6,7,8-tetrahydrobiopterin = (6R)-L-erythro-6,7-dihydrobiopterin + H2O. This chain is Putative pterin-4-alpha-carbinolamine dehydratase, found in Cyanothece sp. (strain PCC 7425 / ATCC 29141).